The primary structure comprises 118 residues: MSQVAKDQKEQQIPSTVHRIRITLTSRNVRNLEKVCSDLVNRAKDKQLRVKGPVRLPTKILKITTRKTPNGEGSKTWETYEMRIHKRLIDLHSPSEIVKQITSIHIEPGVEVEVTIAQ.

Position 37 is a phosphoserine (S37).

Belongs to the universal ribosomal protein uS10 family. Component of the small ribosomal subunit (SSU). Mature yeast ribosomes consist of a small (40S) and a large (60S) subunit. The 40S small subunit contains 1 molecule of ribosomal RNA (18S rRNA) and at least 33 different proteins. The large 60S subunit contains 3 rRNA molecules (25S, 5.8S and 5S rRNA) and at least 46 different proteins.

It localises to the cytoplasm. Component of the ribosome, a large ribonucleoprotein complex responsible for the synthesis of proteins in the cell. The small ribosomal subunit (SSU) binds messenger RNAs (mRNAs) and translates the encoded message by selecting cognate aminoacyl-transfer RNA (tRNA) molecules. The large subunit (LSU) contains the ribosomal catalytic site termed the peptidyl transferase center (PTC), which catalyzes the formation of peptide bonds, thereby polymerizing the amino acids delivered by tRNAs into a polypeptide chain. The nascent polypeptides leave the ribosome through a tunnel in the LSU and interact with protein factors that function in enzymatic processing, targeting, and the membrane insertion of nascent chains at the exit of the ribosomal tunnel. The chain is Small ribosomal subunit protein uS10 (rps20) from Schizosaccharomyces pombe (strain 972 / ATCC 24843) (Fission yeast).